A 288-amino-acid polypeptide reads, in one-letter code: 4-hydroxybenzoate octaprenyltransferase (288 aa).

The next 8 membrane-spanning stretches (helical) occupy residues 23–43 (IGSL…GKGI), 46–66 (TKIL…GCVV), 98–118 (ILFV…NSMT), 141–161 (LPQV…FAAV), 165–185 (LPLV…AYDT), 213–233 (LIIG…GWLM), 234–254 (NLGG…VHQQ), and 268–288 (AFLN…ISYL).

This sequence belongs to the UbiA prenyltransferase family. The cofactor is Mg(2+).

It localises to the cell inner membrane. The catalysed reaction is all-trans-octaprenyl diphosphate + 4-hydroxybenzoate = 4-hydroxy-3-(all-trans-octaprenyl)benzoate + diphosphate. It participates in cofactor biosynthesis; ubiquinone biosynthesis. Functionally, catalyzes the prenylation of para-hydroxybenzoate (PHB) with an all-trans polyprenyl group. Mediates the second step in the final reaction sequence of ubiquinone-8 (UQ-8) biosynthesis, which is the condensation of the polyisoprenoid side chain with PHB, generating the first membrane-bound Q intermediate 3-octaprenyl-4-hydroxybenzoate. The sequence is that of 4-hydroxybenzoate octaprenyltransferase from Yersinia enterocolitica serotype O:8 / biotype 1B (strain NCTC 13174 / 8081).